The chain runs to 408 residues: Myb/SANT-like DNA-binding domain-containing protein 4 (408 aa).

The region spanning 4-77 is the Myb-like domain; sequence LKRKRKSNFS…EVKRRYLDWR (74 aa). A coiled-coil region spans residues 236 to 367; sequence HLLVTLEKQK…IEKERLQDAL (132 aa).

This is Myb/SANT-like DNA-binding domain-containing protein 4 (msantd4) from Xenopus tropicalis (Western clawed frog).